Reading from the N-terminus, the 378-residue chain is Deoxyguanosinetriphosphate triphosphohydrolase-like protein (378 aa).

The segment at 1 to 28 (MLAPFACQPGESRGRQKPESMSTFRSPF) is disordered. An HD domain is found at 62–198 (RLTHSIEVAQ…AAIADDVAYS (137 aa)).

The protein belongs to the dGTPase family. Type 2 subfamily.

In Cereibacter sphaeroides (strain ATCC 17029 / ATH 2.4.9) (Rhodobacter sphaeroides), this protein is Deoxyguanosinetriphosphate triphosphohydrolase-like protein.